Here is a 234-residue protein sequence, read N- to C-terminus: DNA repair protein RecO (234 aa).

It belongs to the RecO family.

Functionally, involved in DNA repair and RecF pathway recombination. The polypeptide is DNA repair protein RecO (Coxiella burnetii (strain RSA 331 / Henzerling II)).